Consider the following 529-residue polypeptide: Na(+)/H(+) antiporter NhaB (529 aa).

Transmembrane regions (helical) follow at residues 13–33, 34–54, 90–110, 113–133, 136–156, 205–225, 241–261, 306–326, 327–347, 351–371, 451–471, and 479–499; these read FLGK…IINP, IVFF…EFIF, LVAN…IYFM, LLLF…ILSL, CFAA…AVVI, LLMH…VGEP, FLIR…LTCF, GLIA…VGLI, GLSV…HSLG, EEAL…AVII, ATPN…APLI, and VIMA…GIVF.

This sequence belongs to the NhaB Na(+)/H(+) (TC 2.A.34) antiporter family.

Its subcellular location is the cell inner membrane. It carries out the reaction 2 Na(+)(in) + 3 H(+)(out) = 2 Na(+)(out) + 3 H(+)(in). In terms of biological role, na(+)/H(+) antiporter that extrudes sodium in exchange for external protons. In Vibrio vulnificus (strain CMCP6), this protein is Na(+)/H(+) antiporter NhaB.